We begin with the raw amino-acid sequence, 656 residues long: Mucin-20 (656 aa).

A signal peptide spans 1-21 (MGSVWGLAVPLLVFCWKVGVS). 3 stretches are compositionally biased toward polar residues: residues 85 to 96 (ATSISSEVNSRD), 114 to 125 (PAASSLEAQTTS), and 159 to 170 (TTSPAPSFLDTQ). Disordered regions lie at residues 85-125 (ATSI…QTTS), 159-232 (TTSP…TQTI), and 329-348 (YLSS…LSSS). The span at 171–227 (TTSPEPSSLTTSPAPSSLITSPTPSSLTTSPAPSFLDTQTTSPAPSSLTTSPAPSSL) shows a compositional bias: low complexity. 5 tandem repeats follow at residues 180-188 (TTSPAPSSL), 189-197 (ITSPTPSSL), 198-206 (TTSPAPSFL), 210-218 (TTSPAPSSL), and 219-227 (TTSPAPSSL). The segment at 180–227 (TTSPAPSSLITSPTPSSLTTSPAPSFLDTQTTSPAPSSLTTSPAPSSL) is approximate repeats. Residues Asn-366 and Asn-570 are each glycosylated (N-linked (GlcNAc...) asparagine). The tract at residues 399 to 603 (TAALFTSEIL…WIRKTTKHDP (205 aa)) is involved in oligomerization. Positions 560 to 573 (STTASTSKNPNITL) are enriched in polar residues. Residues 560–592 (STTASTSKNPNITLTKTTASPKPPTHPTTSAST) are disordered. An interaction with MET region spans residues 604-656 (GEDGGFLLVRLTVASPKDLTEHNAREKLMNQLRRELHARMPLVHMSFLSIRRG).

As to quaternary structure, interacts with MET; oligomerization increases affinity for MET. Highly expressed in kidney. Up-regulated in renal tissues during renal injury.

Its subcellular location is the secreted. It localises to the apical cell membrane. It is found in the basolateral cell membrane. The protein localises to the cell projection. The protein resides in the microvillus membrane. Its function is as follows. May regulate MET signaling cascade. Seems to decrease hepatocyte growth factor (HGF)-induced transient MAPK activation. Blocks GRB2 recruitment to MET thus suppressing the GRB2-RAS pathway. Inhibits HGF-induced proliferation of MMP1 and MMP9 expression. The protein is Mucin-20 (Muc20) of Mus musculus (Mouse).